We begin with the raw amino-acid sequence, 435 residues long: Beta-arrestin arr-1 (435 aa).

Residues 358 to 382 (LTHSKPPESPERTDRGLPSIEATNG) are disordered. Residues 362–372 (KPPESPERTDR) are compositionally biased toward basic and acidic residues. Positions 390–394 (LIQLH) match the Clathrin box motif. The [DE]-X(1,2)-F-X-X-[FL]-X-X-X-R motif motif lies at 404–414 (DLIFEDFARMR). The tract at residues 416-435 (HGNDSEDQPSPSANLPPSLL) is disordered. Low complexity predominate over residues 424 to 435 (PSPSANLPPSLL).

It belongs to the arrestin family. In terms of assembly, component of a complex composed of arr-1, daf-18 and mpz-1. Within the complex, interacts (via C-terminus) with mpz-1 (via PDZ domain) and phosphatase daf-18. May interact (via C-terminus) with clathrin chc-1 and beta-2 adaptin (AP2) apb-1. As to expression, expressed in head neurons, nerve ring and ventral nerve cord (at protein level). Expressed in the nervous system including the nerve ring and the ventral and dorsal nerve cords. Highly expressed in amphid chemosensory neurons AWA, AWB, AWC, ADL and ASH, and in hermaphrodite specific neuron HSN. Also expressed in the intestine.

It is found in the perikaryon. The protein localises to the cell projection. It localises to the dendrite. Functionally, adapter protein required for olfactory adaptation and recovery to volatile odorants, probably by desensitization of G-protein coupled receptors (GPCR). May play a role in clathrin-mediated GPCR endocytosis. Acts as a positive regulator of insulin-like daf-2 signaling pathway probably by forming a complex with mpz-1 and phosphatase daf-18 likely resulting in daf-18 inhibition. Involved in egg-laying. The protein is Beta-arrestin arr-1 of Caenorhabditis elegans.